We begin with the raw amino-acid sequence, 169 residues long: S-ribosylhomocysteine lyase (169 aa).

Residues His-54, His-58, and Cys-129 each coordinate Fe cation.

This sequence belongs to the LuxS family. In terms of assembly, homodimer. Fe cation is required as a cofactor.

The catalysed reaction is S-(5-deoxy-D-ribos-5-yl)-L-homocysteine = (S)-4,5-dihydroxypentane-2,3-dione + L-homocysteine. Functionally, involved in the synthesis of autoinducer 2 (AI-2) which is secreted by bacteria and is used to communicate both the cell density and the metabolic potential of the environment. The regulation of gene expression in response to changes in cell density is called quorum sensing. Catalyzes the transformation of S-ribosylhomocysteine (RHC) to homocysteine (HC) and 4,5-dihydroxy-2,3-pentadione (DPD). The sequence is that of S-ribosylhomocysteine lyase from Haemophilus ducreyi (strain 35000HP / ATCC 700724).